The sequence spans 252 residues: Phosphomannomutase (252 aa).

Asp-13 functions as the Nucleophile in the catalytic mechanism. The Mg(2+) site is built by Asp-13 and Asp-15. The active-site Proton donor/acceptor is Asp-15. Positions 22, 124, 135, 142, 180, and 182 each coordinate alpha-D-mannose 1-phosphate. Positions 208, 220, and 225 each coordinate Mg(2+).

This sequence belongs to the eukaryotic PMM family. Homodimer. Mg(2+) serves as cofactor.

The protein localises to the cytoplasm. It carries out the reaction alpha-D-mannose 1-phosphate = D-mannose 6-phosphate. It functions in the pathway nucleotide-sugar biosynthesis; GDP-alpha-D-mannose biosynthesis; alpha-D-mannose 1-phosphate from D-fructose 6-phosphate: step 2/2. Functionally, catalyzes the interconversion of mannose-6-phosphate to mannose-1-phosphate, the precursor for the synthesis of GDP-mannose. GDP-mannose is an essential sugar nucleotide for the synthesis of D-mannose-containing cell wall polysaccharides (galactomannans and glucomannans), glycolipids, glycoproteins and the antioxidant L-ascorbate. Can complement the yeast temperature-sensitive mutant sec53-6. The polypeptide is Phosphomannomutase (Solanum lycopersicum (Tomato)).